Reading from the N-terminus, the 160-residue chain is Lipoprotein signal peptidase (160 aa).

2 consecutive transmembrane segments (helical) span residues 63–83 (YRLP…AVTF) and 89–109 (DQHL…GNLI). Residues aspartate 119 and aspartate 137 contribute to the active site. Residues 132-152 (AFNVADSAICVGVALLAVDMI) form a helical membrane-spanning segment.

This sequence belongs to the peptidase A8 family.

Its subcellular location is the cell inner membrane. It carries out the reaction Release of signal peptides from bacterial membrane prolipoproteins. Hydrolyzes -Xaa-Yaa-Zaa-|-(S,diacylglyceryl)Cys-, in which Xaa is hydrophobic (preferably Leu), and Yaa (Ala or Ser) and Zaa (Gly or Ala) have small, neutral side chains.. It functions in the pathway protein modification; lipoprotein biosynthesis (signal peptide cleavage). This protein specifically catalyzes the removal of signal peptides from prolipoproteins. This chain is Lipoprotein signal peptidase, found in Geobacter sulfurreducens (strain ATCC 51573 / DSM 12127 / PCA).